The primary structure comprises 158 residues: Rhombotin-2 (158 aa).

LIM zinc-binding domains are found at residues 30 to 89 (CGGC…RLFG) and 94 to 153 (CASC…EWTK).

Interacts with BEX2 and KDM5A. Interacts via its LIM domains with ELF2 and LDB1. Also interacts with basic helix-loop-helix protein TAL1/SCL and can assemble in a complex with LMO2 and TAL1/SCL. Expressed in early mouse development in central nervous system, lung, kidney, liver and spleen but only very low levels occur in thymus.

It localises to the nucleus. Functionally, acts with TAL1/SCL to regulate red blood cell development. Also acts with LDB1 to maintain erythroid precursors in an immature state. This chain is Rhombotin-2 (Lmo2), found in Mus musculus (Mouse).